The chain runs to 181 residues: Segregation and condensation protein B (181 aa).

Belongs to the ScpB family. Homodimer. Homodimerization may be required to stabilize the binding of ScpA to the Smc head domains. Component of a cohesin-like complex composed of ScpA, ScpB and the Smc homodimer, in which ScpA and ScpB bind to the head domain of Smc. The presence of the three proteins is required for the association of the complex with DNA.

It localises to the cytoplasm. Its function is as follows. Participates in chromosomal partition during cell division. May act via the formation of a condensin-like complex containing Smc and ScpA that pull DNA away from mid-cell into both cell halves. The protein is Segregation and condensation protein B of Desulforamulus reducens (strain ATCC BAA-1160 / DSM 100696 / MI-1) (Desulfotomaculum reducens).